The sequence spans 551 residues: Nucleobase-ascorbate transporter 3 (551 aa).

The disordered stretch occupies residues 1–30 (MVETGHHHQHPPAPAAAGHPPVPSMAMARN). 12 helical membrane passes run 56–76 (ETVVLAFQHYIVMLGTTVLIA), 92–111 (RVIQTILFMSGINTLLQTLI), 117–136 (TVMGVSFAYVLPVLSIIRDY), 158–178 (SLIISSFVNIIIGYGQAWGNL), 179–199 (IRIFSPIIVVPVVSVVSLGLF), 202–222 (GFPLLANCVEIGLPMLILLII), 242–262 (ALLVCLAIIWAFAAILTVSGA), 306–326 (VFGMFGAAIVASAESTGVFFA), 390–410 (FFMIFFSIFGKFGAFFASIPL), 412–432 (IFAGVYCILLGIVVAVGISFI), 442–462 (NMYVIGVSLFLSLSIAQYFLA), and 481–501 (DILNTIFASAPLVATILATIL).

The protein belongs to the nucleobase:cation symporter-2 (NCS2) (TC 2.A.40) family. In terms of tissue distribution, expressed in the apical meristem 4 days after imbibition (DAI). Expressed in the major veins of rosette leaves and pedicels. Expressed in the root central cylinder, root meristems, root tips and lateral root primordia.

It is found in the membrane. In Arabidopsis thaliana (Mouse-ear cress), this protein is Nucleobase-ascorbate transporter 3 (NAT3).